A 327-amino-acid chain; its full sequence is MAADGTIRHDWAIDEIVALHNLPLLELVGRANAVHRMHHDPNKVQKASLLSIKTGGCPENCAYCPQSAHHREVDLTRDRLMDPESVVAMAATARAAGAERFCMGAAWRQVRDGREFDAVIEMVKGVRALGMEACVTLGMLKPHQAERLAAAGLTAYNHNLDTSPEFYGQIITTRTYQDRLDTLATVRSFGIDLCCGGIIGMGETIRDRASMLHILAAMEPHPESVPINALVPVEGTPLAKRPVIAPLELVRMVATARLVMPASTVRLSAGRSNLNREAQILCLVAGANSVFYGDTLLTTPNAGIGEDAELFAAIGELDCDHVSASAA.

The 227-residue stretch at 42-268 (NKVQKASLLS…VMPASTVRLS (227 aa)) folds into the Radical SAM core domain. [4Fe-4S] cluster is bound by residues Cys57, Cys61, and Cys64. Residues Cys102, Cys134, Cys194, and Arg266 each contribute to the [2Fe-2S] cluster site.

Belongs to the radical SAM superfamily. Biotin synthase family. Homodimer. Requires [4Fe-4S] cluster as cofactor. [2Fe-2S] cluster is required as a cofactor.

It catalyses the reaction (4R,5S)-dethiobiotin + (sulfur carrier)-SH + 2 reduced [2Fe-2S]-[ferredoxin] + 2 S-adenosyl-L-methionine = (sulfur carrier)-H + biotin + 2 5'-deoxyadenosine + 2 L-methionine + 2 oxidized [2Fe-2S]-[ferredoxin]. The protein operates within cofactor biosynthesis; biotin biosynthesis; biotin from 7,8-diaminononanoate: step 2/2. Catalyzes the conversion of dethiobiotin (DTB) to biotin by the insertion of a sulfur atom into dethiobiotin via a radical-based mechanism. This is Biotin synthase from Rhizobium rhizogenes (strain K84 / ATCC BAA-868) (Agrobacterium radiobacter).